Here is a 406-residue protein sequence, read N- to C-terminus: MDLLLTNARLVTLQSGEMGYQPSTPMSIGIKAGKIHYLGIDTALAATKQIDLKGKLVTPGLIDCHTHLVYAGNRSNEFEMRLQGVPYQEIARQGGGILSTVYATRQASEAQLLEQTLPRLDGLLASGVTSVEVKSGYGLTLVDEIKMLRVAKSLSQHRLVKVTPTLLAAHALPPEFTGRANDYIEFICQEIIPLVAEEQLATSVDVFCESIGFDLAQTERVYACAVEHGLRIKGHTEQLSNLGGTALTARYQGLSADHIEFLDPAGVEALARSSTVATLLPGAFYFLRETQLPPIELLRQFGVPMAIASDVNPGTSPFCDLTLMMNMACTLFRLTPEEALRGVTQNAAQALGYAESRGQIKTGYEADLAIWQIEHPADLSYQVGTQRLFARVVDGQFEQHKECCDE.

Histidine 65 and histidine 67 together coordinate Fe(3+). Zn(2+)-binding residues include histidine 65 and histidine 67. 3 residues coordinate 4-imidazolone-5-propanoate: arginine 74, tyrosine 137, and histidine 170. Residue tyrosine 137 participates in N-formimidoyl-L-glutamate binding. Fe(3+) is bound at residue histidine 235. Histidine 235 is a Zn(2+) binding site. Glutamine 238 is a binding site for 4-imidazolone-5-propanoate. Aspartate 310 serves as a coordination point for Fe(3+). Position 310 (aspartate 310) interacts with Zn(2+). Residues asparagine 312 and glycine 314 each contribute to the N-formimidoyl-L-glutamate site. Residue threonine 315 coordinates 4-imidazolone-5-propanoate.

Belongs to the metallo-dependent hydrolases superfamily. HutI family. Zn(2+) serves as cofactor. Requires Fe(3+) as cofactor.

The protein localises to the cytoplasm. The enzyme catalyses 4-imidazolone-5-propanoate + H2O = N-formimidoyl-L-glutamate. Its pathway is amino-acid degradation; L-histidine degradation into L-glutamate; N-formimidoyl-L-glutamate from L-histidine: step 3/3. Catalyzes the hydrolytic cleavage of the carbon-nitrogen bond in imidazolone-5-propanoate to yield N-formimidoyl-L-glutamate. It is the third step in the universal histidine degradation pathway. The chain is Imidazolonepropionase from Vibrio vulnificus (strain CMCP6).